A 466-amino-acid polypeptide reads, in one-letter code: FERM domain-containing protein 8 (466 aa).

Methionine 1 is modified (N-acetylmethionine). Residues 1-21 form a disordered region; the sequence is MEGAEGNAGQPGPAERSHRSS. Phosphoserine is present on serine 24. The region spanning 30-377 is the FERM domain; the sequence is ADVLVYLADD…YCIELSQAAE (348 aa). A disordered region spans residues 379 to 409; it reads TLSQESASGPHEAPSPSPPPTQRPKLRRQGS. At serine 384 the chain carries Phosphoserine. The segment covering 391–400 has biased composition (pro residues); the sequence is APSPSPPPTQ. Serine 409 is subject to Phosphoserine. At threonine 420 the chain carries Phosphothreonine. A phosphoserine mark is found at serine 440 and serine 447. Polar residues predominate over residues 442-460; it reads FSRQLSSSQGSYTVVQPTD. Positions 442–466 are disordered; that stretch reads FSRQLSSSQGSYTVVQPTDDSLEQS.

Interacts with iRhom proteins, including iRhom2/RHBDF2 (via cytoplasmic N-termini); this interaction leads to mutual protein stabilization. Interacts with LRP6; this interaction affects LRP6-binding to AXIN1. As to expression, widely expressed (at protein level).

It is found in the cytoplasm. Its subcellular location is the cytosol. The protein resides in the cell membrane. Its function is as follows. Promotes the cell surface stability of iRhom1/RHBDF1 and iRhom2/RHBDF2 and prevents their degradation via the endolysosomal pathway. By acting on iRhoms, involved in ADAM17-mediated shedding of TNF, amphiregulin/AREG, HBEGF and TGFA from the cell surface. Negatively regulates Wnt signaling, possibly by antagonizing the recruitment of AXIN1 to LRP6. This is FERM domain-containing protein 8 (Frmd8) from Mus musculus (Mouse).